Here is a 270-residue protein sequence, read N- to C-terminus: Eukaryotic translation initiation factor 3 subunit G-1 (270 aa).

The 79-residue stretch at 189–267 (AAIRISNLSE…LILSVEWSKP (79 aa)) folds into the RRM domain.

This sequence belongs to the eIF-3 subunit G family. Component of the eukaryotic translation initiation factor 3 (eIF-3) complex. The eIF-3 complex interacts with pix.

The protein resides in the cytoplasm. Its function is as follows. RNA-binding component of the eukaryotic translation initiation factor 3 (eIF-3) complex, which is involved in protein synthesis of a specialized repertoire of mRNAs and, together with other initiation factors, stimulates binding of mRNA and methionyl-tRNAi to the 40S ribosome. The eIF-3 complex specifically targets and initiates translation of a subset of mRNAs involved in cell proliferation. This subunit can bind 18S rRNA. This Drosophila ananassae (Fruit fly) protein is Eukaryotic translation initiation factor 3 subunit G-1.